A 396-amino-acid polypeptide reads, in one-letter code: Tryptophan synthase beta chain (396 aa).

Residue Lys-88 is modified to N6-(pyridoxal phosphate)lysine.

Belongs to the TrpB family. In terms of assembly, tetramer of two alpha and two beta chains. Pyridoxal 5'-phosphate serves as cofactor.

It catalyses the reaction (1S,2R)-1-C-(indol-3-yl)glycerol 3-phosphate + L-serine = D-glyceraldehyde 3-phosphate + L-tryptophan + H2O. The protein operates within amino-acid biosynthesis; L-tryptophan biosynthesis; L-tryptophan from chorismate: step 5/5. Its function is as follows. The beta subunit is responsible for the synthesis of L-tryptophan from indole and L-serine. The polypeptide is Tryptophan synthase beta chain (Shewanella sp. (strain ANA-3)).